Here is a 197-residue protein sequence, read N- to C-terminus: Dermorphin-1 (197 aa).

The signal sequence occupies residues 1-20 (MSFLKKSLLLILFLGLVSLS). Positions 21–45 (VCKEEKRETEEENENEENHEEGSEM) are excised as a propeptide. A disordered region spans residues 24-197 (EEKRETEEEN…GYPSGEAKKM (174 aa)). A compositionally biased stretch (acidic residues) spans 30 to 39 (EEENENEENH). A compositionally biased stretch (basic and acidic residues) spans 40–62 (EEGSEMKRYMFHLMDGEAKKRDS). D-methionine is present on Met-49. The residue at position 54 (Asp-54) is an Aspartic acid 1-amide. Residues 56–77 (EAKKRDSEENEIEENHEEGSEM) constitute a propeptide that is removed on maturation. A D-alanine (Ala) modification is found at Ala-81. Position 86 is a serine amide (Ser-86). Positions 88–97 (EAKKIKRVSE) are enriched in basic and acidic residues. The propeptide occupies 88–112 (EAKKIKRVSEEENENEENHEEGSEM). Ala-116 carries the post-translational modification D-alanine (Ala). Serine amide is present on Ser-121. The segment covering 123-132 (EAKKIKRESE) has biased composition (basic and acidic residues). Positions 123–147 (EAKKIKRESEEEKEIEENHEEGSEM) are excised as a propeptide. A D-alanine (Ala) modification is found at Ala-151. The residue at position 156 (Ser-156) is a Serine amide. The propeptide occupies 158-182 (EAKKIKRESEEENENEENHEEGSEM). Residues 167–176 (EEENENEENH) show a composition bias toward acidic residues. Position 186 is a D-alanine (Ala) (Ala-186). A Serine amide modification is found at Ser-191. The propeptide occupies 193 to 197 (EAKKM).

It belongs to the frog skin active peptide (FSAP) family. Dermorphin subfamily. In terms of tissue distribution, expressed by the skin glands.

It localises to the secreted. Dermorphin has a very potent opiate-like activity. It has high affinity and selectivity for mu-type opioid receptors. Its function is as follows. Deltorphin has a very potent opiate-like activity. It has high affinity and selectivity for delta-type opioid receptors. The protein is Dermorphin-1 of Phyllomedusa sauvagei (Sauvage's leaf frog).